We begin with the raw amino-acid sequence, 367 residues long: UDP-N-acetylenolpyruvoylglucosamine reductase 2 (367 aa).

An FAD-binding PCMH-type domain is found at 31–198; that stretch reads IGGKPRSAVR…LAIELQLLTD (168 aa). Residue Arg-176 is part of the active site. Ser-256 functions as the Proton donor in the catalytic mechanism. Glu-357 is an active-site residue.

Belongs to the MurB family. Requires FAD as cofactor.

Its subcellular location is the cytoplasm. It carries out the reaction UDP-N-acetyl-alpha-D-muramate + NADP(+) = UDP-N-acetyl-3-O-(1-carboxyvinyl)-alpha-D-glucosamine + NADPH + H(+). It functions in the pathway cell wall biogenesis; peptidoglycan biosynthesis. Cell wall formation. This is UDP-N-acetylenolpyruvoylglucosamine reductase 2 (murB2) from Corynebacterium glutamicum (strain ATCC 13032 / DSM 20300 / JCM 1318 / BCRC 11384 / CCUG 27702 / LMG 3730 / NBRC 12168 / NCIMB 10025 / NRRL B-2784 / 534).